Reading from the N-terminus, the 114-residue chain is Ribosome-binding factor A (114 aa).

The protein belongs to the RbfA family. As to quaternary structure, monomer. Binds 30S ribosomal subunits, but not 50S ribosomal subunits or 70S ribosomes.

The protein resides in the cytoplasm. Functionally, one of several proteins that assist in the late maturation steps of the functional core of the 30S ribosomal subunit. Associates with free 30S ribosomal subunits (but not with 30S subunits that are part of 70S ribosomes or polysomes). Required for efficient processing of 16S rRNA. May interact with the 5'-terminal helix region of 16S rRNA. This Phytoplasma mali (strain AT) protein is Ribosome-binding factor A.